The sequence spans 166 residues: Endoribonuclease YbeY (166 aa).

Zn(2+)-binding residues include His-132, His-136, and His-142.

The protein belongs to the endoribonuclease YbeY family. Zn(2+) serves as cofactor.

The protein resides in the cytoplasm. In terms of biological role, single strand-specific metallo-endoribonuclease involved in late-stage 70S ribosome quality control and in maturation of the 3' terminus of the 16S rRNA. The sequence is that of Endoribonuclease YbeY from Clostridium acetobutylicum (strain ATCC 824 / DSM 792 / JCM 1419 / IAM 19013 / LMG 5710 / NBRC 13948 / NRRL B-527 / VKM B-1787 / 2291 / W).